The sequence spans 32 residues: Jingzhaotoxin F4-32.60 (32 aa).

3 disulfides stabilise this stretch: Cys-2–Cys-17, Cys-9–Cys-22, and Cys-16–Cys-29. An Aspartic acid 1-amide modification is found at Asp-31.

Belongs to the neurotoxin 10 (Hwtx-1) family. 30 (Jztx-14) subfamily. Amidated as well as non-amidated forms are found in the venom. Expressed by the venom gland.

The protein localises to the secreted. Its function is as follows. Probable ion channel inhibitor. This is Jingzhaotoxin F4-32.60 from Chilobrachys guangxiensis (Chinese earth tiger tarantula).